Here is a 335-residue protein sequence, read N- to C-terminus: DNA-directed RNA polymerase subunit alpha (335 aa).

Residues 1-231 (MVREKVTVST…DLFIPFLHME (231 aa)) are alpha N-terminal domain (alpha-NTD). The alpha C-terminal domain (alpha-CTD) stretch occupies residues 262 to 335 (KKKLSLESIF…FALDLPKNLN (74 aa)).

It belongs to the RNA polymerase alpha chain family. In plastids the minimal PEP RNA polymerase catalytic core is composed of four subunits: alpha, beta, beta', and beta''. When a (nuclear-encoded) sigma factor is associated with the core the holoenzyme is formed, which can initiate transcription.

It is found in the plastid. It carries out the reaction RNA(n) + a ribonucleoside 5'-triphosphate = RNA(n+1) + diphosphate. DNA-dependent RNA polymerase catalyzes the transcription of DNA into RNA using the four ribonucleoside triphosphates as substrates. This chain is DNA-directed RNA polymerase subunit alpha, found in Cuscuta reflexa (Southern Asian dodder).